A 149-amino-acid polypeptide reads, in one-letter code: Alpha-crystallin A chain (149 aa).

Residues 28-138 form the sHSP domain; it reads LLRGFMDSGI…SHSERPIPVS (111 aa). Positions 55, 76, 78, 83, 91, and 130 each coordinate Zn(2+). The interval 125–149 is disordered; the sequence is NLVSSHSERPIPVSREEKPTSAPSS. Residues 130-143 are compositionally biased toward basic and acidic residues; that stretch reads HSERPIPVSREEKP. The O-linked (GlcNAc) serine glycan is linked to Ser138.

This sequence belongs to the small heat shock protein (HSP20) family. In terms of assembly, heteropolymer composed of three CRYAA and one CRYAB subunits. Inter-subunit bridging via zinc ions enhances stability, which is crucial as there is no protein turn over in the lens. Can also form homodimers and homotetramers (dimers of dimers) which serve as the building blocks of homooligomers. Within homooligomers, the zinc-binding motif is created from residues of 3 different molecules. His-76 and Glu-78 from one molecule are ligands of the zinc ion, and His-83 and His-130 residues from additional molecules complete the site with tetrahedral coordination geometry.

Its subcellular location is the cytoplasm. It is found in the nucleus. In terms of biological role, contributes to the transparency and refractive index of the lens. May act as a chaperone, preventing aggregation of various proteins under a wide range of stress conditions. This is Alpha-crystallin A chain (CRYAA) from Rana temporaria (European common frog).